Consider the following 126-residue polypeptide: Large ribosomal subunit protein bL12 (126 aa).

It belongs to the bacterial ribosomal protein bL12 family. Homodimer. Part of the ribosomal stalk of the 50S ribosomal subunit. Forms a multimeric L10(L12)X complex, where L10 forms an elongated spine to which 2 to 4 L12 dimers bind in a sequential fashion. Binds GTP-bound translation factors.

Functionally, forms part of the ribosomal stalk which helps the ribosome interact with GTP-bound translation factors. Is thus essential for accurate translation. This chain is Large ribosomal subunit protein bL12, found in Methylorubrum populi (strain ATCC BAA-705 / NCIMB 13946 / BJ001) (Methylobacterium populi).